Here is a 376-residue protein sequence, read N- to C-terminus: Protein-glutamate methylesterase/protein-glutamine glutaminase 1 (376 aa).

The 118-residue stretch at 4-121 folds into the Response regulatory domain; it reads KVLVVDDSSF…ARNRDEAVSL (118 aa). Position 55 is a 4-aspartylphosphate (aspartate 55). Residues 138–169 form a disordered region; sequence RPVASSTPVQERPQSTLNRPTTGLRREASAQA. Positions 141–158 are enriched in polar residues; sequence ASSTPVQERPQSTLNRPT. The CheB-type methylesterase domain occupies 183–376; the sequence is SGKKYQLTAI…ERMLVEVGLA (194 aa). Residues serine 195, histidine 222, and aspartate 318 contribute to the active site.

This sequence belongs to the CheB family. Phosphorylated by CheA. Phosphorylation of the N-terminal regulatory domain activates the methylesterase activity.

It is found in the cytoplasm. It carries out the reaction [protein]-L-glutamate 5-O-methyl ester + H2O = L-glutamyl-[protein] + methanol + H(+). The catalysed reaction is L-glutaminyl-[protein] + H2O = L-glutamyl-[protein] + NH4(+). Functionally, involved in chemotaxis. Part of a chemotaxis signal transduction system that modulates chemotaxis in response to various stimuli. Catalyzes the demethylation of specific methylglutamate residues introduced into the chemoreceptors (methyl-accepting chemotaxis proteins or MCP) by CheR. Also mediates the irreversible deamidation of specific glutamine residues to glutamic acid. This chain is Protein-glutamate methylesterase/protein-glutamine glutaminase 1, found in Vibrio vulnificus (strain YJ016).